Reading from the N-terminus, the 256-residue chain is Adenylate kinase (256 aa).

ATP is bound at residue 45-50 (GAGKGT). The tract at residues 67 to 96 (ATGDLLRQQVAMGTDLGKQAKKIMDQGALV) is NMP. AMP contacts are provided by residues threonine 68, arginine 73, 94 to 96 (ALV), 123 to 126 (GFPR), and glutamine 130. Residues 164-201 (GRLIHPGSGRSYHKIFSPPKQPMKDDITGEPLVQRSDD) form an LID region. ATP contacts are provided by residues arginine 165 and 174–175 (SY). Residues arginine 198 and arginine 209 each coordinate AMP. Glutamine 237 is a binding site for ATP.

The protein belongs to the adenylate kinase family. AK2 subfamily. Monomer.

The protein localises to the cytoplasm. Its subcellular location is the cytosol. The protein resides in the mitochondrion intermembrane space. The enzyme catalyses AMP + ATP = 2 ADP. Its function is as follows. Catalyzes the reversible transfer of the terminal phosphate group between ATP and AMP. Plays an important role in cellular energy homeostasis and in adenine nucleotide metabolism. Adenylate kinase activity is critical for regulation of the phosphate utilization and the AMP de novo biosynthesis pathways. In Malassezia globosa (strain ATCC MYA-4612 / CBS 7966) (Dandruff-associated fungus), this protein is Adenylate kinase.